Consider the following 510-residue polypeptide: Beta-galactosidase (510 aa).

E210 (proton donor) is an active-site residue. E414 (nucleophile) is an active-site residue.

This sequence belongs to the glycosyl hydrolase 1 family.

It catalyses the reaction Hydrolysis of terminal non-reducing beta-D-galactose residues in beta-D-galactosides.. This chain is Beta-galactosidase, found in Pyrococcus woesei.